Here is a 199-residue protein sequence, read N- to C-terminus: Probable septum site-determining protein MinC (199 aa).

It belongs to the MinC family. In terms of assembly, interacts with MinD and FtsZ.

Cell division inhibitor that blocks the formation of polar Z ring septums. Rapidly oscillates between the poles of the cell to destabilize FtsZ filaments that have formed before they mature into polar Z rings. Prevents FtsZ polymerization. In Persephonella marina (strain DSM 14350 / EX-H1), this protein is Probable septum site-determining protein MinC.